The following is a 404-amino-acid chain: Aspergillopepsin-1 (404 aa).

The signal sequence occupies residues 1–20 (MVILSKVAAVAVGLSTVASA). A propeptide spans 21–77 (LPTGPSHSPHARRGFTINQITRQTARVGPKTASFPAIYSRALAKYGGTVPAHLKSAV) (activation peptide). A Peptidase A1 domain is found at 95 to 401 (YLTPVNIGGT…DSQGPRLGFA (307 aa)). Aspartate 111 is a catalytic residue. N-linked (GlcNAc...) asparagine glycosylation occurs at asparagine 140. Residue aspartate 293 is part of the active site. Cysteine 329 and cysteine 364 are disulfide-bonded.

This sequence belongs to the peptidase A1 family. Monomer.

It is found in the secreted. It carries out the reaction Hydrolysis of proteins with broad specificity. Generally favors hydrophobic residues in P1 and P1', but also accepts Lys in P1, which leads to activation of trypsinogen. Does not clot milk.. Functionally, secreted aspartic endopeptidase that allows assimilation of proteinaceous substrates. The scissile peptide bond is attacked by a nucleophilic water molecule activated by two aspartic residues in the active site. Shows a broad primary substrate specificity. Favors hydrophobic residues at the P1 and P1' positions, but also accepts a lysine residue in the P1 position, leading to the activation of trypsinogen and chymotrypsinogen A. This chain is Aspergillopepsin-1 (pepA), found in Aspergillus flavus (strain ATCC 200026 / FGSC A1120 / IAM 13836 / NRRL 3357 / JCM 12722 / SRRC 167).